Reading from the N-terminus, the 152-residue chain is Large ribosomal subunit protein uL15 (152 aa).

A disordered region spans residues 1 to 66 (MLQLHTIKPN…PLHRRLPKKG (66 aa)). Gly residues predominate over residues 24 to 36 (ESSGLGKTCGKGN).

It belongs to the universal ribosomal protein uL15 family. In terms of assembly, part of the 50S ribosomal subunit.

Binds to the 23S rRNA. This is Large ribosomal subunit protein uL15 from Akkermansia muciniphila (strain ATCC BAA-835 / DSM 22959 / JCM 33894 / BCRC 81048 / CCUG 64013 / CIP 107961 / Muc).